Consider the following 249-residue polypeptide: Leucyl/phenylalanyl-tRNA--protein transferase (249 aa).

Residues 1 to 21 are disordered; it reads MSRTLPHLLSPDPASPFPPAE.

The protein belongs to the L/F-transferase family.

The protein resides in the cytoplasm. It carries out the reaction N-terminal L-lysyl-[protein] + L-leucyl-tRNA(Leu) = N-terminal L-leucyl-L-lysyl-[protein] + tRNA(Leu) + H(+). It catalyses the reaction N-terminal L-arginyl-[protein] + L-leucyl-tRNA(Leu) = N-terminal L-leucyl-L-arginyl-[protein] + tRNA(Leu) + H(+). The enzyme catalyses L-phenylalanyl-tRNA(Phe) + an N-terminal L-alpha-aminoacyl-[protein] = an N-terminal L-phenylalanyl-L-alpha-aminoacyl-[protein] + tRNA(Phe). Functionally, functions in the N-end rule pathway of protein degradation where it conjugates Leu, Phe and, less efficiently, Met from aminoacyl-tRNAs to the N-termini of proteins containing an N-terminal arginine or lysine. This Xanthomonas campestris pv. campestris (strain B100) protein is Leucyl/phenylalanyl-tRNA--protein transferase.